The chain runs to 393 residues: Alpha-1,2 mannosyltransferase KTR1 (393 aa).

Topologically, residues 1–16 are cytoplasmic; it reads MAKIMIPASKQPVYKK. A helical; Signal-anchor for type II membrane protein transmembrane segment spans residues 17 to 34; that stretch reads LGLLLVAVFTVYVFFHGA. Positions 35–68 are stem region; sequence QYARGSAPSPKYSTVLSSGSGYKYSKVELPKYTG. At 35–393 the chain is on the lumenal side; that stretch reads QYARGSAPSP…KPAGWQNHIG (359 aa). Residues 69 to 393 form a catalytic region; it reads PREKATFVTL…KPAGWQNHIG (325 aa). N-linked (GlcNAc...) asparagine glycosylation occurs at Asn-120. Glu-280 functions as the Nucleophile in the catalytic mechanism.

This sequence belongs to the glycosyltransferase 15 family. The cofactor is Mn(2+). Post-translationally, N-glycosylated.

The protein resides in the golgi apparatus membrane. Its pathway is protein modification; protein glycosylation. In terms of biological role, mannosyltransferase that transfers a mannose residue from GDP-mannose to a range of acceptors in vitro, forming an alpha-(1-&gt;2)-D-mannosyl-D-mannose linkage. In Saccharomyces cerevisiae (strain ATCC 204508 / S288c) (Baker's yeast), this protein is Alpha-1,2 mannosyltransferase KTR1 (KTR1).